A 202-amino-acid chain; its full sequence is Guanylyl cyclase-activating protein 1 (202 aa).

The N-myristoyl glycine moiety is linked to residue G2. N3 carries the post-translational modification Deamidated asparagine. 4 EF-hand domains span residues 31–49, 51–86, 87–122, and 131–166; these read SGQL…KNLS, SASQ…VLKG, KVEQ…IRTI, and SAEE…DQML. Positions 64, 66, 68, 70, 75, 100, 102, 104, 106, 111, 144, 146, 148, 150, and 155 each coordinate Ca(2+).

In terms of assembly, homodimer. In terms of tissue distribution, in the retina, expressed in rod photoreceptors (at protein level). Expressed in cone photoreceptors.

It is found in the membrane. The protein localises to the photoreceptor inner segment. It localises to the cell projection. Its subcellular location is the cilium. The protein resides in the photoreceptor outer segment. Stimulates retinal guanylyl cyclase when free calcium ions concentration is low and inhibits guanylyl cyclase when free calcium ions concentration is elevated. This Ca(2+)-sensitive regulation of retinal guanylyl cyclase is a key event in recovery of the dark state of rod photoreceptors following light exposure. May be involved in cone photoreceptor light response and recovery of response in bright light. The sequence is that of Guanylyl cyclase-activating protein 1 (Guca1a) from Mus musculus (Mouse).